Reading from the N-terminus, the 291-residue chain is Exosome complex component rrp45 (291 aa).

It belongs to the RNase PH family. As to quaternary structure, component of the RNA exosome complex. Specifically part of the catalytically inactive RNA exosome core complex (Exo-9) which may associate with the catalytic subunits rrp6 and dis3 in cytoplasmic- and nuclear-specific RNA exosome complex forms. Exo-9 is formed by a hexameric base ring of RNase PH domain-containing subunits and a cap ring consisting of csl4, rrp4 and rrp40.

The protein localises to the cytoplasm. The protein resides in the nucleus. It is found in the nucleolus. Its function is as follows. Non-catalytic component of the RNA exosome complex which has 3'-&gt;5' exoribonuclease activity and participates in a multitude of cellular RNA processing and degradation events. In the nucleus, the RNA exosome complex is involved in proper maturation of stable RNA species such as rRNA, snRNA and snoRNA, in the elimination of RNA processing by-products and non-coding 'pervasive' transcripts, such as antisense RNA species and cryptic unstable transcripts (CUTs), and of mRNAs with processing defects, thereby limiting or excluding their export to the cytoplasm. In the cytoplasm, the RNA exosome complex is involved in general mRNA turnover and in RNA surveillance pathways, preventing translation of aberrant mRNAs. The catalytic inactive RNA exosome core complex of 9 subunits (Exo-9) is proposed to play a pivotal role in the binding and presentation of RNA for ribonucleolysis, and to serve as a scaffold for the association with catalytic subunits and accessory proteins or complexes. ski6 is part of the hexameric ring of RNase PH domain-containing subunits proposed to form a central channel which threads RNA substrates for degradation. The polypeptide is Exosome complex component rrp45 (rrp45) (Schizosaccharomyces pombe (strain 972 / ATCC 24843) (Fission yeast)).